The following is a 206-amino-acid chain: Methylthioribulose-1-phosphate dehydratase (206 aa).

His-96 and His-98 together coordinate Zn(2+).

The protein belongs to the aldolase class II family. MtnB subfamily. It depends on Zn(2+) as a cofactor.

The enzyme catalyses 5-(methylsulfanyl)-D-ribulose 1-phosphate = 5-methylsulfanyl-2,3-dioxopentyl phosphate + H2O. It participates in amino-acid biosynthesis; L-methionine biosynthesis via salvage pathway; L-methionine from S-methyl-5-thio-alpha-D-ribose 1-phosphate: step 2/6. Functionally, catalyzes the dehydration of methylthioribulose-1-phosphate (MTRu-1-P) into 2,3-diketo-5-methylthiopentyl-1-phosphate (DK-MTP-1-P). The sequence is that of Methylthioribulose-1-phosphate dehydratase from Azotobacter vinelandii (strain DJ / ATCC BAA-1303).